Consider the following 573-residue polypeptide: Putative ferric-chelate reductase 1 (573 aa).

A helical transmembrane segment spans residues 4–24; sequence VCKSPQRLLFVLVSCFGLVQS. One can recognise a Reelin domain in the interval 15–181; that stretch reads LVSCFGLVQS…GTTGTSTTPA (167 aa). One can recognise a DOMON domain in the interval 213–328; it reads GCYFVAVQAS…NEYYLMIAAG (116 aa). Asn286 and Asn300 each carry an N-linked (GlcNAc...) asparagine glycan. One can recognise a Cytochrome b561 domain in the interval 332 to 532; the sequence is QGNIQFHTNK…YILQDLNLRA (201 aa). The chain crosses the membrane as a helical span at residues 369-389; that stretch reads AHGCLMLISWMATGSIGMIIA. The heme b site is built by His370 and His411. Transmembrane regions (helical) follow at residues 414–434 and 441–461; these read LMTLSIIATAIAFIIVFVSAG and HPVLGCLVMILSLIQPIVAAF. Residues His441 and His477 each coordinate heme b. The next 3 helical transmembrane spans lie at 479–499, 506–526, and 550–570; these read CNAFAIKCLAVAAIFTGLALF, GWMLKVMGGYLAWEALMYILQ, and ILLFLFIIGNLAFLIALLVGI.

Belongs to the FRRS1 family. Requires heme b as cofactor.

Its subcellular location is the membrane. Putative ferric-chelate reductases reduce Fe(3+) to Fe(2+) before its transport from the endosome to the cytoplasm. In Danio rerio (Zebrafish), this protein is Putative ferric-chelate reductase 1 (frrs1).